A 314-amino-acid chain; its full sequence is tRNA-cytidine(32) 2-sulfurtransferase (314 aa).

The PP-loop motif motif lies at 46–51 (SGGKDS). Residues C121, C124, and C212 each contribute to the [4Fe-4S] cluster site.

The protein belongs to the TtcA family. As to quaternary structure, homodimer. Requires Mg(2+) as cofactor. The cofactor is [4Fe-4S] cluster.

It localises to the cytoplasm. The catalysed reaction is cytidine(32) in tRNA + S-sulfanyl-L-cysteinyl-[cysteine desulfurase] + AH2 + ATP = 2-thiocytidine(32) in tRNA + L-cysteinyl-[cysteine desulfurase] + A + AMP + diphosphate + H(+). The protein operates within tRNA modification. Functionally, catalyzes the ATP-dependent 2-thiolation of cytidine in position 32 of tRNA, to form 2-thiocytidine (s(2)C32). The sulfur atoms are provided by the cysteine/cysteine desulfurase (IscS) system. This chain is tRNA-cytidine(32) 2-sulfurtransferase, found in Nitrosomonas europaea (strain ATCC 19718 / CIP 103999 / KCTC 2705 / NBRC 14298).